The primary structure comprises 487 residues: UPF0276 protein SAV_2218 (487 aa).

The UPF0276 stretch occupies residues 1 to 285 (MVEEGTMERL…LGAIRKTLEK (285 aa)). A unknown region spans residues 286-487 (AGTRAGASAG…RATRRVLLRR (202 aa)). Positions 319 to 348 (AGPRRGGADAQAAPRAAGTEALSAASTSTP) are disordered. Residues 326-348 (ADAQAAPRAAGTEALSAASTSTP) show a composition bias toward low complexity.

The protein in the N-terminal section; belongs to the UPF0276 family.

The protein is UPF0276 protein SAV_2218 of Streptomyces avermitilis (strain ATCC 31267 / DSM 46492 / JCM 5070 / NBRC 14893 / NCIMB 12804 / NRRL 8165 / MA-4680).